Consider the following 122-residue polypeptide: Ig heavy chain V region M511 (122 aa).

The Ig-like domain occupies 1–114 (EVKLVESGGG…SYWYFDVWGA (114 aa)).

The polypeptide is Ig heavy chain V region M511 (Mus musculus (Mouse)).